The primary structure comprises 96 residues: Evasin P1074 (96 aa).

The N-terminal stretch at 1 to 28 (MAFNMITFLQMAVFVVILFNINLHSASA) is a signal peptide. 3 disulfide bridges follow: cysteine 48/cysteine 67, cysteine 52/cysteine 69, and cysteine 63/cysteine 80. N-linked (GlcNAc...) asparagine glycosylation is present at asparagine 74.

It localises to the secreted. Its function is as follows. Salivary chemokine-binding protein which binds to host chemokines CXCL1 and CXCL8. This chain is Evasin P1074, found in Ixodes ricinus (Common tick).